The primary structure comprises 209 residues: Endoplasmic reticulum vesicle protein 25 (209 aa).

The signal sequence occupies residues 1 to 18 (MKYTTFGIISLFLSVTWA). The Lumenal segment spans residues 19 to 178 (LRFELAASFE…TNESTNRRVR (160 aa)). The GOLD domain occupies 31–119 (PFCIRDFVEA…MRNVEVNIES (89 aa)). A helical membrane pass occupies residues 179-199 (NFSMAVIVVFAALCAWQLNYL). Residues 200–209 (KNYFRAKHII) lie on the Cytoplasmic side of the membrane.

The protein belongs to the EMP24/GP25L family.

It is found in the endoplasmic reticulum membrane. The protein localises to the golgi apparatus membrane. Functionally, constituent of COPII-coated endoplasmic reticulum-derived transport vesicles. Required for efficient transport of a subset of secretory proteins to the Golgi. Facilitates retrograde transport from the Golgi to the endoplasmic reticulum. The sequence is that of Endoplasmic reticulum vesicle protein 25 (ERV25) from Eremothecium gossypii (strain ATCC 10895 / CBS 109.51 / FGSC 9923 / NRRL Y-1056) (Yeast).